The following is a 443-amino-acid chain: MSFQIRVFTAILAVLSLFTAPVLAQNSGPLRIEITEGVIEPLPFALPVFEAETADAADVAAQITQVIAADLTGTGLFRQIEPDAFISTVSSFAAPIQYADWKAINAQALITGAVAVQGNQLNVKFRLYDVFSGAEMGDGLQFSATPDGWRRMAHKVADAVYSRITGEGGYFDSRVVYVSETGTKDARQKRLAIMDYDGANVKYLTDSSSIVLAPRFSPDGQRILYTSYETGFPRIYVLDVTSLQRRGLESQEGTMSFAPRFAPDGQTIVFSLSQGGNTDIYRMNVNGGSATRLTSAPSIETAPSYSPDGTQIVFESDRSGSQQLYVMPANGGEARRISFGPGRYGTPVWSPRGDLVAFTKQNAGRFHIGVMRLDGSEERLLTASFLDEGPTWSPNGRVIMFSRETQGAQGRATLYSVDITGRNLRPVRTPEGGSDPSWSPLQR.

The first 24 residues, 1–24, serve as a signal peptide directing secretion; the sequence is MSFQIRVFTAILAVLSLFTAPVLA. Residues 424–443 form a disordered region; the sequence is LRPVRTPEGGSDPSWSPLQR.

It belongs to the TolB family. As to quaternary structure, the Tol-Pal system is composed of five core proteins: the inner membrane proteins TolA, TolQ and TolR, the periplasmic protein TolB and the outer membrane protein Pal. They form a network linking the inner and outer membranes and the peptidoglycan layer.

The protein localises to the periplasm. Part of the Tol-Pal system, which plays a role in outer membrane invagination during cell division and is important for maintaining outer membrane integrity. In Roseobacter denitrificans (strain ATCC 33942 / OCh 114) (Erythrobacter sp. (strain OCh 114)), this protein is Tol-Pal system protein TolB.